The following is a 497-amino-acid chain: Beta-glucosidase 8 (497 aa).

A signal peptide spans 1 to 22; that stretch reads MKHFNLLSIILVIVLATSYIDA. An a beta-D-glucoside-binding site is contributed by Q42. A glycan (N-linked (GlcNAc...) asparagine) is linked at N65. A beta-D-glucoside is bound by residues H139 and 184–185; that span reads NE. The active-site Proton donor is E185. Residue N202 is glycosylated (N-linked (GlcNAc...) asparagine). Y319 serves as a coordination point for a beta-D-glucoside. N354 carries N-linked (GlcNAc...) asparagine glycosylation. The a beta-D-glucoside site is built by E387, W430, and F446. Residue E387 is the Nucleophile of the active site. 3 N-linked (GlcNAc...) asparagine glycosylation sites follow: N452, N474, and N490.

Belongs to the glycosyl hydrolase 1 family.

The enzyme catalyses Hydrolysis of terminal, non-reducing beta-D-glucosyl residues with release of beta-D-glucose.. The protein is Beta-glucosidase 8 of Arabidopsis thaliana (Mouse-ear cress).